Reading from the N-terminus, the 337-residue chain is Viral cathepsin (337 aa).

The signal sequence occupies residues 1–18 (MYLIYYYTIIAVATASIA). The propeptide at 19-126 (NEKIFYDIDS…VTVAGPSART (108 aa)) is activation peptide. 3 cysteine pairs are disulfide-bonded: C147/C188, C181/C221, and C276/C324. C150 is an active-site residue. Residues H283 and N303 contribute to the active site.

This sequence belongs to the peptidase C1 family. Post-translationally, synthesized as an inactive proenzyme and activated by proteolytic removal of the inhibitory propeptide.

It carries out the reaction Endopeptidase of broad specificity, hydrolyzing substrates of both cathepsin L and cathepsin B.. Cysteine protease that plays an essential role in host liquefaction to facilitate horizontal transmission of the virus. May participate in the degradation of foreign protein expressed by the baculovirus system. The chain is Viral cathepsin (VCATH) from Spodoptera litura multicapsid nucleopolyhedrovirus (SpltMNPV).